Reading from the N-terminus, the 434-residue chain is Ribosomal protein uS12 methylthiotransferase RimO (434 aa).

The region spanning 4-122 (NRVDVITLGC…LISHLGKSYY (119 aa)) is the MTTase N-terminal domain. Residues C13, C51, C85, C146, C150, and C153 each contribute to the [4Fe-4S] cluster site. Positions 132-363 (TTPRHYAYLK…MAVQERISAA (232 aa)) constitute a Radical SAM core domain. Residues 366–434 (EAKIGSRLHV…PFDLYARIVD (69 aa)) enclose the TRAM domain.

It belongs to the methylthiotransferase family. RimO subfamily. [4Fe-4S] cluster serves as cofactor.

The protein localises to the cytoplasm. The catalysed reaction is L-aspartate(89)-[ribosomal protein uS12]-hydrogen + (sulfur carrier)-SH + AH2 + 2 S-adenosyl-L-methionine = 3-methylsulfanyl-L-aspartate(89)-[ribosomal protein uS12]-hydrogen + (sulfur carrier)-H + 5'-deoxyadenosine + L-methionine + A + S-adenosyl-L-homocysteine + 2 H(+). Catalyzes the methylthiolation of an aspartic acid residue of ribosomal protein uS12. This Porphyromonas gingivalis (strain ATCC BAA-308 / W83) protein is Ribosomal protein uS12 methylthiotransferase RimO.